A 208-amino-acid chain; its full sequence is Urease accessory protein UreG 2 (208 aa).

G16–T23 contacts GTP.

It belongs to the SIMIBI class G3E GTPase family. UreG subfamily. Homodimer. UreD, UreF and UreG form a complex that acts as a GTP-hydrolysis-dependent molecular chaperone, activating the urease apoprotein by helping to assemble the nickel containing metallocenter of UreC. The UreE protein probably delivers the nickel.

The protein resides in the cytoplasm. Facilitates the functional incorporation of the urease nickel metallocenter. This process requires GTP hydrolysis, probably effectuated by UreG. The protein is Urease accessory protein UreG 2 of Methylobacterium radiotolerans (strain ATCC 27329 / DSM 1819 / JCM 2831 / NBRC 15690 / NCIMB 10815 / 0-1).